The following is a 521-amino-acid chain: Apolipoprotein N-acyltransferase (521 aa).

6 helical membrane-spanning segments follow: residues 34–54, 64–84, 100–120, 137–157, 176–196, and 206–226; these read LAAP…PLLV, AFWL…RWLL, LAIA…VIGL, LFAV…ETAF, VALG…ALVA, and YAGL…WQLA. The CN hydrolase domain maps to 240 to 480; it reads IQGNIAQARK…YAAFVEPVRL (241 aa). Residue Glu281 is the Proton acceptor of the active site. Lys341 is a catalytic residue. Cys392 (nucleophile) is an active-site residue. The helical transmembrane segment at 488 to 508 threads the bilayer; sequence ALWGDWFVPLSAALALLGLIA.

Belongs to the CN hydrolase family. Apolipoprotein N-acyltransferase subfamily.

The protein localises to the cell inner membrane. It catalyses the reaction N-terminal S-1,2-diacyl-sn-glyceryl-L-cysteinyl-[lipoprotein] + a glycerophospholipid = N-acyl-S-1,2-diacyl-sn-glyceryl-L-cysteinyl-[lipoprotein] + a 2-acyl-sn-glycero-3-phospholipid + H(+). The protein operates within protein modification; lipoprotein biosynthesis (N-acyl transfer). Its function is as follows. Catalyzes the phospholipid dependent N-acylation of the N-terminal cysteine of apolipoprotein, the last step in lipoprotein maturation. The protein is Apolipoprotein N-acyltransferase of Gloeobacter violaceus (strain ATCC 29082 / PCC 7421).